A 423-amino-acid chain; its full sequence is Glucose-6-phosphate isomerase (423 aa).

The active-site Proton donor is Glu-279. Catalysis depends on residues His-300 and Lys-413.

This sequence belongs to the GPI family.

It localises to the cytoplasm. It carries out the reaction alpha-D-glucose 6-phosphate = beta-D-fructose 6-phosphate. The protein operates within carbohydrate biosynthesis; gluconeogenesis. It functions in the pathway carbohydrate degradation; glycolysis; D-glyceraldehyde 3-phosphate and glycerone phosphate from D-glucose: step 2/4. Its function is as follows. Catalyzes the reversible isomerization of glucose-6-phosphate to fructose-6-phosphate. This Acholeplasma laidlawii (strain PG-8A) protein is Glucose-6-phosphate isomerase.